An 835-amino-acid polypeptide reads, in one-letter code: Cell division control protein 48 (835 aa).

A disordered region spans residues 1 to 21 (MGEEHKPLLDASGVDPREEDK). 257–263 (PGTGKTL) serves as a coordination point for ATP. Glycyl lysine isopeptide (Lys-Gly) (interchain with G-Cter in ubiquitin) cross-links involve residues lysine 305, lysine 322, and lysine 346. ATP contacts are provided by asparagine 358 and histidine 394. A phosphoserine mark is found at serine 472 and serine 519. Lysine 522 participates in a covalent cross-link: Glycyl lysine isopeptide (Lys-Gly) (interchain with G-Cter in ubiquitin). 531–536 (GTGKTL) contacts ATP. Glycyl lysine isopeptide (Lys-Gly) (interchain with G-Cter in ubiquitin) cross-links involve residues lysine 539, lysine 594, and lysine 673. Basic and acidic residues predominate over residues 720–729 (EAEKEVKVEG). Residues 720-746 (EAEKEVKVEGEDVEMTDEGAKAEQEPE) are disordered. Phosphothreonine is present on threonine 735. Position 770 is a phosphoserine (serine 770). The tract at residues 792-835 (SNFNFNDAPLGTTATDNANSNNSAPSGAGAAFGSNAEEDDDLYS) is disordered. The span at 802-826 (GTTATDNANSNNSAPSGAGAAFGSN) shows a compositional bias: low complexity.

The protein belongs to the AAA ATPase family. Component of the heterotrimeric CDC48-NPL4-UFD1 ATPase complex. The CDC48-NPL4-UFD1 ATPase complex interacts with the HRD1 ubiquitin ligase complex composed of the E3 ligase HRD1, its cofactors HRD3, USA1 and DER1, substrate recruiting factor YOS9 and CDC48-binding protein UBX2. Interaction between the complexes is mediated by interaction between CDC48-NPL4-UFD1 complex member CDC48 and HRD1 complex member UBX2. Forms a complex composed of CDC48, NPL4, UFD1, UFD2 and SHP1. Forms a complex composed of CDC48, NPL4, UFD1, DOA1, SHP1 and deubiquitinase OTU1; within the complex interacts with DOA1/UFD3 and OTU1 to prevent multiubiquitination of substrates. Interacts with UFD2, to add further ubiquitin moieties; the interaction with UFD2 is prevented by DOA1/UFD3. Forms a complex composed of CDC48, DOA1, deubiquitinase UBP3 and probably BRE5; within the complex interacts with DOA1 and UBP3. Interacts (via C-terminus) with DOA1 (via PUL domain); the interaction is direct. Interacts with NPL4. Interacts with SHP1/UBX1, UBX2, UBX3, UBX4, UBX5, UBX6 and UBX7. Interacts with VMS1; the interaction recruits CDC48 to the mitochondria in response to mitochondrial stress. Component of the ribosome quality control complex (RQC), composed of the E3 ubiquitin ligase RKR1/LTN1, RQC1 and RQC2, as well as CDC48 and its ubiquitin-binding cofactors. RQC forms a stable complex with 60S ribosomal subunits. Interacts with ASE1 and CDC5; the interaction is likely to result in their degradation. Component of the DSCc E3 ligase complexes composed of at least TUL1, DSC2, DSC3, UBX3, CDC48 as well as VLD1 for the vacuole-localized complex or GLD1 for the Golgi/endosome-localized complex.

It localises to the microsome. It is found in the endoplasmic reticulum. Its subcellular location is the cytoplasm. The enzyme catalyses ATP + H2O = ADP + phosphate + H(+). Its activity is regulated as follows. The first ATP-binding region has low ATPase activity. The second ATP-binding region is responsible for ATPase activity. ATP binding to the first ATP-binding region induces intrinsic activity of the second ATP-binding region. While ATP binding to the first ATP-binding region appears to prevent ATP hydrolysis by the second ATP-binding region, ADP-binding to first region promotes the coordinate and cooperative ATPase cycle of the second ATP-binding region. ATP binding to the first ATP-binding region induces a conformational change, promoting the rotation of the first ATP-binding region relative to the second ATP-binding region in the hexamer. Functionally, ATP-dependent chaperone which probably uses the energy provided by ATP hydrolysis to generate mechanical force to unfold substrate proteins, disassemble protein complexes, and disaggregate protein aggregates. By recruiting and promoting the degradation of ubiquitinated proteins, plays a role in the ubiquitin fusion degradation (UFD) pathway. Has a role in the endoplasmic reticulum-associated degradation (ERAD) pathway which mediates the cytoplasmic elimination of misfolded proteins exported from the ER. Required for the proteasome-dependent processing/activation of MGA2 and SPT23 transcription factors leading to the subsequent expression of OLE1. Has an additional role in the turnover of OLE1 where it targets ubiquitinated OLE1 and other proteins to the ERAD. Regulates ubiquitin-mediated mitochondria protein degradation. Involved in spindle disassembly probably by promoting the degradation of spindle assembly factors ASE1 and CDC5 at the end of mitosis. Component of the ribosome quality control complex (RQC), a ribosome-associated complex that mediates ubiquitination and extraction of incompletely synthesized nascent chains for proteasomal degradation. CDC48 may provide the mechanical force that dislodges the polyubiquitinated nascent peptides from the exit channel. Required for ribophagy, a process which relocalizes ribosomal particles into the vacuole for degradation in response to starvation. Component of the DSC E3 ubiquitin ligase complexes that tag proteins present in Golgi, endosome and vacuole membranes and function in protein homeostasis under non-stress conditions and support a role in protein quality control. Substrate initially binds through the attached polyubiquitin chain to UDF1/NPL4 and then moves through the pore of the ATPase rings and is thereby unfolded. Acts on a broad range of even well-folded proteins via ubiquitin-binding and unfolding to initiate substrate processing. Involved in degradation of mislocalized tail-anchored transmembrane proteins extracted from the mitochondrion outer membrane by MSP1 and ubiquitinated by DOA10. The protein is Cell division control protein 48 of Saccharomyces cerevisiae (strain ATCC 204508 / S288c) (Baker's yeast).